The following is a 388-amino-acid chain: Branched-chain-amino-acid aminotransferase 2, chloroplastic (388 aa).

A chloroplast-targeting transit peptide spans 1 to 22 (MIKTITSLRKTLVLPLHLHIRT). Lys-235 carries the post-translational modification N6-(pyridoxal phosphate)lysine.

This sequence belongs to the class-IV pyridoxal-phosphate-dependent aminotransferase family. The cofactor is pyridoxal 5'-phosphate.

It localises to the plastid. It is found in the chloroplast. It catalyses the reaction L-leucine + 2-oxoglutarate = 4-methyl-2-oxopentanoate + L-glutamate. The catalysed reaction is L-isoleucine + 2-oxoglutarate = (S)-3-methyl-2-oxopentanoate + L-glutamate. It carries out the reaction L-valine + 2-oxoglutarate = 3-methyl-2-oxobutanoate + L-glutamate. It functions in the pathway amino-acid biosynthesis; L-isoleucine biosynthesis; L-isoleucine from 2-oxobutanoate: step 4/4. It participates in amino-acid biosynthesis; L-leucine biosynthesis; L-leucine from 3-methyl-2-oxobutanoate: step 4/4. Its pathway is amino-acid biosynthesis; L-valine biosynthesis; L-valine from pyruvate: step 4/4. Converts 2-oxo acids to branched-chain amino acids. Shows activity with L-Leu, L-Ile and L-Val as amino donors and 2-oxoglutarate as an amino acceptor, but no activity for D-isomers of Leu, Ile, Val, Asp, Glu or Ala. This chain is Branched-chain-amino-acid aminotransferase 2, chloroplastic (BCAT2), found in Arabidopsis thaliana (Mouse-ear cress).